We begin with the raw amino-acid sequence, 278 residues long: Shikimate dehydrogenase (NADP(+)) (278 aa).

Shikimate is bound by residues 18–20 and threonine 65; that span reads SRS. Lysine 69 serves as the catalytic Proton acceptor. An NADP(+)-binding site is contributed by glutamate 80. Positions 89 and 104 each coordinate shikimate. NADP(+) contacts are provided by residues 129–133 and leucine 218; that span reads GAGGS. Residue tyrosine 220 participates in shikimate binding. Glycine 241 lines the NADP(+) pocket.

The protein belongs to the shikimate dehydrogenase family. Homodimer.

It catalyses the reaction shikimate + NADP(+) = 3-dehydroshikimate + NADPH + H(+). The protein operates within metabolic intermediate biosynthesis; chorismate biosynthesis; chorismate from D-erythrose 4-phosphate and phosphoenolpyruvate: step 4/7. Its function is as follows. Involved in the biosynthesis of the chorismate, which leads to the biosynthesis of aromatic amino acids. Catalyzes the reversible NADPH linked reduction of 3-dehydroshikimate (DHSA) to yield shikimate (SA). The protein is Shikimate dehydrogenase (NADP(+)) of Rhodopseudomonas palustris (strain ATCC BAA-98 / CGA009).